A 299-amino-acid chain; its full sequence is MVTEEEVTAIGRTLLDAAQPLPARFRALFTLRNLGGPAAIDCIVRGFADSSALLKHELAFCLGQMRDRAAIPALLGVLQDSQQEPMVRHEAGEALGAIGDPEVLDVLRRYSEDPVVEVAETCQLAVRRLEWLQEHGEEPGSSPYRSVDPAPPAEETDVATLRAVLLDESRPLFDRYRAMFALRNLGGRDAVLALADGLRAGSALFRHEIGYVLGQMQDEACVPQLTAALRSRAENPMVRHECAEALGSIARPSCLETLRAFAQDEERVVRESCEVALDMYEYENGPQFQYADGLCRLQA.

HEAT-like PBS-type repeat units lie at residues Leu54 to Asp80, Val87 to Asp113, Asp174 to Ala200, Phe205 to Ser231, and Val238 to Asp264. Fe cation-binding residues include His56, His89, and Glu90. His207, His240, and Glu241 together coordinate Fe cation.

This sequence belongs to the deoxyhypusine hydroxylase family. Fe(2+) is required as a cofactor.

It carries out the reaction [eIF5A protein]-deoxyhypusine + AH2 + O2 = [eIF5A protein]-hypusine + A + H2O. It participates in protein modification; eIF5A hypusination. Functionally, catalyzes the hydroxylation of the N(6)-(4-aminobutyl)-L-lysine intermediate produced by deoxyhypusine synthase/DHPS on a critical lysine of the eukaryotic translation initiation factor 5A/eIF-5A. This is the second step of the post-translational modification of that lysine into an unusual amino acid residue named hypusine. Hypusination is unique to mature eIF-5A factor and is essential for its function. This Gallus gallus (Chicken) protein is Deoxyhypusine hydroxylase.